A 270-amino-acid polypeptide reads, in one-letter code: 4-hydroxy-tetrahydrodipicolinate reductase (270 aa).

Residues 8–13 and glutamate 34 each bind NAD(+); that span reads GAAGRM. Arginine 35 is a binding site for NADP(+). NAD(+) is bound by residues 98–100 and 122–125; these read GST and SPNM. Histidine 155 (proton donor/acceptor) is an active-site residue. Histidine 156 contributes to the (S)-2,3,4,5-tetrahydrodipicolinate binding site. The active-site Proton donor is the lysine 159. Position 165–166 (165–166) interacts with (S)-2,3,4,5-tetrahydrodipicolinate; the sequence is GT.

The protein belongs to the DapB family.

It localises to the cytoplasm. The catalysed reaction is (S)-2,3,4,5-tetrahydrodipicolinate + NAD(+) + H2O = (2S,4S)-4-hydroxy-2,3,4,5-tetrahydrodipicolinate + NADH + H(+). It catalyses the reaction (S)-2,3,4,5-tetrahydrodipicolinate + NADP(+) + H2O = (2S,4S)-4-hydroxy-2,3,4,5-tetrahydrodipicolinate + NADPH + H(+). It participates in amino-acid biosynthesis; L-lysine biosynthesis via DAP pathway; (S)-tetrahydrodipicolinate from L-aspartate: step 4/4. Catalyzes the conversion of 4-hydroxy-tetrahydrodipicolinate (HTPA) to tetrahydrodipicolinate. This Anaeromyxobacter dehalogenans (strain 2CP-1 / ATCC BAA-258) protein is 4-hydroxy-tetrahydrodipicolinate reductase.